A 172-amino-acid chain; its full sequence is Peptidyl-prolyl cis-trans isomerase (172 aa).

The 164-residue stretch at 7–170 folds into the PPIase cyclophilin-type domain; that stretch reads FFDMTVGGAP…KVVKVADCGQ (164 aa).

This sequence belongs to the cyclophilin-type PPIase family.

The protein localises to the cytoplasm. The catalysed reaction is [protein]-peptidylproline (omega=180) = [protein]-peptidylproline (omega=0). Binds cyclosporin A (CsA). CsA mediates some of its effects via an inhibitory action on PPIase. Its function is as follows. PPIases accelerate the folding of proteins. It catalyzes the cis-trans isomerization of proline imidic peptide bonds in oligopeptides. The polypeptide is Peptidyl-prolyl cis-trans isomerase (CYP) (Zea mays (Maize)).